A 130-amino-acid chain; its full sequence is Early E3B 14.5 kDa protein (130 aa).

The first 19 residues, 1–19 (MKRIVTFVLLIFCALPVLC), serve as a signal peptide directing secretion. A helical membrane pass occupies residues 53 to 77 (AWLYAIISVMVFCSTIFALAIYPYL).

Belongs to the adenoviridae E3_14 family. In terms of processing, phosphorylated on serine; O-glycosylated, but not N-glycosylated.

Its subcellular location is the host membrane. Down-regulates the EGF receptor and prevents cytolysis by TNF. The sequence is that of Early E3B 14.5 kDa protein from Human adenovirus C serotype 6 (HAdV-6).